The primary structure comprises 145 residues: MTTRREGRELALQALYSKDLVLQDANSTLKRITESFSEGEEPTLSVNSKAYAFASELVNGVVSNLQQIDSRIAEKSKHWSMARMARVDLNILRLAVFELLYRPDIPKNVTMNEAIEVAKKFGADDSASFVNGILDEIASTVTDKE.

This sequence belongs to the NusB family.

Functionally, involved in transcription antitermination. Required for transcription of ribosomal RNA (rRNA) genes. Binds specifically to the boxA antiterminator sequence of the ribosomal RNA (rrn) operons. This is Transcription antitermination protein NusB from Geobacter sp. (strain M21).